A 1030-amino-acid chain; its full sequence is Teashirt homolog 2 (1030 aa).

A disordered region spans residues 1-120 (MPRRKQQAPK…THPKLPSEPH (120 aa)). A coiled-coil region spans residues 11–42 (RAAGYAQEEVLKEEEEIKEEEEEEEDSGSVAQ). Positions 21–37 (LKEEEEIKEEEEEEEDS) are enriched in acidic residues. Composition is skewed to polar residues over residues 39–49 (SVAQHQSSNDT) and 66–95 (SCQNSPGSHLSNQDAENESLLSDASDQVSD). Over residues 103-120 (DVSDKKANTHPKLPSEPH) the composition is skewed to basic and acidic residues. K189 is covalently cross-linked (Glycyl lysine isopeptide (Lys-Gly) (interchain with G-Cter in SUMO2)). 2 C2H2-type zinc fingers span residues 216 to 240 (FRCRQCSAAYDTLVELTVHMNETGH) and 276 to 300 (LKCMFCGDSFDSLQDLSVHMIKTKH). A disordered region spans residues 240-266 (HYQDDNRKKDKLRPTSYSKPRKRAFQD). Glycyl lysine isopeptide (Lys-Gly) (interchain with G-Cter in SUMO2) cross-links involve residues K307 and K316. Residues 328-348 (VNRPCSPDSTTGSLADSFSSQ) form a disordered region. Residues 334-348 (PDSTTGSLADSFSSQ) are compositionally biased toward polar residues. A C2H2-type 3; atypical zinc finger spans residues 381-405 (LKCMECGSSHDTLQQLTTHMMVTGH). K418 participates in a covalent cross-link: Glycyl lysine isopeptide (Lys-Gly) (interchain with G-Cter in SUMO2). The segment covering 432–459 (SLSETPNSESLAPKPSSNSPSECTASTT) has biased composition (polar residues). The segment at 432–488 (SLSETPNSESLAPKPSSNSPSECTASTTELKKESKKEKGEGIEDEQGVKSEDYEDSL) is disordered. Positions 460–482 (ELKKESKKEKGEGIEDEQGVKSE) are enriched in basic and acidic residues. Glycyl lysine isopeptide (Lys-Gly) (interchain with G-Cter in SUMO2) cross-links involve residues K462, K480, K497, and K601. Basic and acidic residues-rich tracts occupy residues 608–623 (DEVVKQCGKESPHEEA) and 633–664 (SFSKIEPPSESRKAEPCPLKEEEKPQKEKPEP). 3 disordered regions span residues 608 to 687 (DEVV…LPSI), 703 to 726 (KATEPLRSPSCSSPNSSTSPVFHK), and 759 to 784 (QPIDLTKSKSKRAESSQAQSCTSPPQ). K652 is covalently cross-linked (Glycyl lysine isopeptide (Lys-Gly) (interchain with G-Cter in SUMO2)). Positions 710–722 (SPSCSSPNSSTSP) are enriched in low complexity. Residues 773-783 (SSQAQSCTSPP) show a composition bias toward polar residues. Glycyl lysine isopeptide (Lys-Gly) (interchain with G-Cter in SUMO2) cross-links involve residues K796 and K816. Residues 837 to 907 (RKGRQSNWNP…NVKYQLRKTG (71 aa)) constitute a DNA-binding region (homeobox). The segment at 922–944 (FYCSDCASQFRTPSTYISHLESH) adopts a C2H2-type 4 zinc-finger fold. K962 is covalently cross-linked (Glycyl lysine isopeptide (Lys-Gly) (interchain with G-Cter in SUMO2)). Disordered regions lie at residues 965 to 987 (QEISRVSSAQRSPETIAGEEDTD) and 1009 to 1030 (LSKTHSKSPEHHSQFVADVDEE). A compositionally biased stretch (polar residues) spans 968–977 (SRVSSAQRSP). At S976 the chain carries Phosphoserine. The C2H2-type 5 zinc finger occupies 990 to 1013 (FKCKLCRRTFVSKHAVKLHLSKTH).

The protein belongs to the teashirt C2H2-type zinc-finger protein family. As to quaternary structure, interacts (via homeobox domain) with APBB1 (via PID domain 1). In terms of processing, sumoylated.

The protein localises to the nucleus. Its function is as follows. Probable transcriptional regulator involved in developmental processes. May act as a transcriptional repressor (Potential). This is Teashirt homolog 2 (Tshz2) from Mus musculus (Mouse).